Here is a 303-residue protein sequence, read N- to C-terminus: Putative S-adenosyl-L-methionine-dependent methyltransferase MAB_0213c (303 aa).

S-adenosyl-L-methionine contacts are provided by residues Asp-126 and Asp-155 to Leu-156.

Belongs to the UPF0677 family.

Exhibits S-adenosyl-L-methionine-dependent methyltransferase activity. The polypeptide is Putative S-adenosyl-L-methionine-dependent methyltransferase MAB_0213c (Mycobacteroides abscessus (strain ATCC 19977 / DSM 44196 / CCUG 20993 / CIP 104536 / JCM 13569 / NCTC 13031 / TMC 1543 / L948) (Mycobacterium abscessus)).